A 291-amino-acid polypeptide reads, in one-letter code: Bifunctional protein FolD (291 aa).

NADP(+)-binding positions include 168 to 170, Thr-195, and Val-236; that span reads GRG.

It belongs to the tetrahydrofolate dehydrogenase/cyclohydrolase family. As to quaternary structure, homodimer.

It catalyses the reaction (6R)-5,10-methylene-5,6,7,8-tetrahydrofolate + NADP(+) = (6R)-5,10-methenyltetrahydrofolate + NADPH. The enzyme catalyses (6R)-5,10-methenyltetrahydrofolate + H2O = (6R)-10-formyltetrahydrofolate + H(+). The protein operates within one-carbon metabolism; tetrahydrofolate interconversion. Catalyzes the oxidation of 5,10-methylenetetrahydrofolate to 5,10-methenyltetrahydrofolate and then the hydrolysis of 5,10-methenyltetrahydrofolate to 10-formyltetrahydrofolate. This is Bifunctional protein FolD from Bifidobacterium longum (strain DJO10A).